Reading from the N-terminus, the 115-residue chain is Large ribosomal subunit protein bL20 (115 aa).

Belongs to the bacterial ribosomal protein bL20 family.

Functionally, binds directly to 23S ribosomal RNA and is necessary for the in vitro assembly process of the 50S ribosomal subunit. It is not involved in the protein synthesizing functions of that subunit. This Borrelia turicatae (strain 91E135) protein is Large ribosomal subunit protein bL20.